Here is a 1997-residue protein sequence, read N- to C-terminus: Otoferlin (1997 aa).

The 98-residue stretch at 1-98 (MALIVHLKTV…VEENRVEVTD (98 aa)) folds into the C2 1 domain. The Cytoplasmic portion of the chain corresponds to 1–1963 (MALIVHLKTV…ARYFLWHTYR (1963 aa)). The tract at residues 140 to 167 (QEEKDSQETDGLLPGSRPSTRISGEKSF) is disordered. C2 domains follow at residues 235–356 (KRSK…HKWA) and 399–530 (IEGN…FLPT). Residues 643-692 (VDGMSRPLRPRPRKEPGDEEEVDLIQNSSDDEGDEAGDLASVSSTPPMRP) are disordered. Residues 659-679 (GDEEEVDLIQNSSDDEGDEAG) are compositionally biased toward acidic residues. Residues 791–820 (RERLKSCMRELESMGQQAKSLRAQVKRHTV) adopt a coiled-coil conformation. C2 domains are found at residues 943–1068 (LHSF…PPRF) and 1115–1241 (RGPI…PNWN). 5 residues coordinate Ca(2+): D975, D981, D1037, D1039, and D1045. Disordered stretches follow at residues 1253-1272 (LRNG…SMEP), 1296-1326 (DVAE…ESML), and 1343-1402 (LRQH…EKKK). Composition is skewed to acidic residues over residues 1314-1325 (EEPEEEEPDESM) and 1352-1361 (DLEEKEEMES). Positions 1370-1383 (KSKEKSRAAKEEKK) are enriched in basic and acidic residues. 2 consecutive C2 domains span residues 1464 to 1593 (LPED…ATCG) and 1714 to 1865 (DMPA…KQCT). 8 residues coordinate Ca(2+): D1508, D1514, D1563, D1565, D1571, D1836, S1839, and D1842. A helical membrane pass occupies residues 1964 to 1984 (WLLLKFLLLFLLLLLFALFLY). At 1985-1997 (SLPGYLAKKILGA) the chain is on the extracellular side.

Belongs to the ferlin family. Interacts with SNAP25; the interaction is direct. Interacts with STX1; the interaction is direct. Interacts with RAB8B. It depends on Ca(2+) as a cofactor. In terms of tissue distribution, isoform 1 is expressed in cochlea and brain. Expressed in the cochlear and vestibular hair cells. Expressed in both inner and outer hair cells (IHCs and OHCs) and cochlear ganglions neurons at postnatal day 2 (P2) and 6 (P6). Expressed only in IHCs at postnatal day 60 (P60) (at protein level). Strongly expressed in brain and inner ear. In the inner ear, it is mainly expressed in the cochlear IHC and vestibular type I sensory hair cells. Weakly expressed in eye, heart, skeletal muscle, liver, kidney, lung and testis.

The protein localises to the cytoplasmic vesicle. The protein resides in the secretory vesicle. It is found in the synaptic vesicle membrane. Its subcellular location is the basolateral cell membrane. It localises to the endoplasmic reticulum membrane. The protein localises to the golgi apparatus membrane. The protein resides in the presynaptic cell membrane. It is found in the cell membrane. Its function is as follows. Key calcium ion sensor involved in the Ca(2+)-triggered synaptic vesicle-plasma membrane fusion and in the control of neurotransmitter release at these output synapses. Interacts in a calcium-dependent manner to the presynaptic SNARE proteins at ribbon synapses of cochlear inner hair cells (IHCs) to trigger exocytosis of neurotransmitter. Also essential to synaptic exocytosis in immature outer hair cells (OHCs). May also play a role within the recycling of endosomes. In Mus musculus (Mouse), this protein is Otoferlin (Otof).